A 99-amino-acid chain; its full sequence is NADH-quinone oxidoreductase subunit K (99 aa).

Transmembrane regions (helical) follow at residues 3–23, 28–48, and 59–79; these read PINY…GVLL, IVMF…FVTF, and MIAF…LAII.

It belongs to the complex I subunit 4L family. As to quaternary structure, NDH-1 is composed of 14 different subunits. Subunits NuoA, H, J, K, L, M, N constitute the membrane sector of the complex.

Its subcellular location is the cell membrane. The catalysed reaction is a quinone + NADH + 5 H(+)(in) = a quinol + NAD(+) + 4 H(+)(out). NDH-1 shuttles electrons from NADH, via FMN and iron-sulfur (Fe-S) centers, to quinones in the respiratory chain. The immediate electron acceptor for the enzyme in this species is believed to be a menaquinone. Couples the redox reaction to proton translocation (for every two electrons transferred, four hydrogen ions are translocated across the cytoplasmic membrane), and thus conserves the redox energy in a proton gradient. The polypeptide is NADH-quinone oxidoreductase subunit K (Mycobacterium avium (strain 104)).